Here is a 614-residue protein sequence, read N- to C-terminus: DBH-like monooxygenase protein 1 (614 aa).

Positions 1-22 (MRPLRPWALLLGALLGAAAAAA) are cleaved as a signal peptide. Over 23 to 592 (RRYPHVAVLD…SSSCLPCSLS (570 aa)) the chain is Lumenal. The 114-residue stretch at 35 to 148 (AAYRLLWGRR…STVRVIWAYH (114 aa)) folds into the DOMON domain. Asn-114 carries an N-linked (GlcNAc...) asparagine glycan. Residue Tyr-203 is part of the active site. Disulfide bonds link Cys-205-Cys-257 and Cys-242-Cys-269. 2 residues coordinate Cu cation: His-235 and His-236. N-linked (GlcNAc...) asparagine glycosylation is present at Asn-247. The Cu cation site is built by His-307, His-389, His-391, and Met-464. Disulfide bonds link Cys-364/Cys-480, Cys-368/Cys-550, and Cys-443/Cys-465. His-389 is a catalytic residue. 2 N-linked (GlcNAc...) asparagine glycosylation sites follow: Asn-476 and Asn-517. Residues 593–613 (LTLLFVVYVASSTIGNFGPVV) traverse the membrane as a helical segment.

This sequence belongs to the copper type II ascorbate-dependent monooxygenase family. It depends on Cu(2+) as a cofactor.

It is found in the endoplasmic reticulum membrane. The protein is DBH-like monooxygenase protein 1 (MOXD1) of Gallus gallus (Chicken).